The following is a 171-amino-acid chain: Protein E8^E2C (171 aa).

The disordered stretch occupies residues 15-54 (DQISTTETADPKTTEATNNESTQGTKRRRLDLPDSRDNTQ). Residues 28 to 38 (TEATNNESTQG) show a composition bias toward polar residues.

Belongs to the papillomaviridae E8^E2C protein family.

Its subcellular location is the host nucleus. In terms of biological role, plays a role in limiting the replication of viral DNA in keratinocytes. Recruits the host NCoR/SMRT complex to viral replication foci to mediate repression of both viral replication and transcription. The protein is Protein E8^E2C of Homo sapiens (Human).